The primary structure comprises 333 residues: tRNA N6-adenosine threonylcarbamoyltransferase (333 aa).

Residues histidine 111 and histidine 115 each coordinate Fe cation. Substrate is bound by residues 134–138 (VVSGG), aspartate 167, glycine 180, aspartate 184, and asparagine 273. Fe cation is bound at residue aspartate 302.

It belongs to the KAE1 / TsaD family. The cofactor is Fe(2+).

The protein localises to the cytoplasm. It carries out the reaction L-threonylcarbamoyladenylate + adenosine(37) in tRNA = N(6)-L-threonylcarbamoyladenosine(37) in tRNA + AMP + H(+). In terms of biological role, required for the formation of a threonylcarbamoyl group on adenosine at position 37 (t(6)A37) in tRNAs that read codons beginning with adenine. Is involved in the transfer of the threonylcarbamoyl moiety of threonylcarbamoyl-AMP (TC-AMP) to the N6 group of A37, together with TsaE and TsaB. TsaD likely plays a direct catalytic role in this reaction. This chain is tRNA N6-adenosine threonylcarbamoyltransferase, found in Anaeromyxobacter sp. (strain Fw109-5).